Reading from the N-terminus, the 212-residue chain is COP9 signalosome complex subunit 8 (212 aa).

Residues 26-193 enclose the PCI domain; the sequence is TSLSAYEEQA…KPVVTAPPKD (168 aa).

The protein belongs to the CSN8 family. In terms of assembly, component of the COP9 signalosome (CSN) complex.

Its subcellular location is the cytoplasm. The protein resides in the nucleus. In terms of biological role, component of the COP9 signalosome (CSN) complex that acts as an regulator of the ubiquitin (Ubl) conjugation pathway by mediating the deneddylation of the cullin subunit of SCF-type E3 ubiquitin-protein ligase complexes. The CSN complex seems to link protein degradation to sexual development. This chain is COP9 signalosome complex subunit 8 (csnH), found in Emericella nidulans (strain FGSC A4 / ATCC 38163 / CBS 112.46 / NRRL 194 / M139) (Aspergillus nidulans).